A 538-amino-acid polypeptide reads, in one-letter code: Dolichol kinase (538 aa).

Residues 1–18 are Lumenal-facing; the sequence is MTRECAPPTPGSGAPLSG. Residues 19–39 form a helical membrane-spanning segment; the sequence is SVLAEAAVVFVVVLSIHAAVW. The Cytoplasmic portion of the chain corresponds to 40–74; sequence DRYSWCAVALAVQAFYVQYKWDRLLQQGSAVFQFR. Residues 75 to 95 form a helical membrane-spanning segment; it reads MSANSGLLPASVVMPLLGLVM. Residues 96–111 lie on the Lumenal side of the membrane; that stretch reads KERCQAAGNPYFERFG. The helical transmembrane segment at 112–132 threads the bilayer; sequence IVVAATGMAVALFSSVLALGI. Over 133 to 134 the chain is Cytoplasmic; it reads TR. Residues 135–155 traverse the membrane as a helical segment; that stretch reads PVPTNTCVISGLAGGVIIYIM. Residues 156-163 are Lumenal-facing; it reads KHSLSVGE. A helical transmembrane segment spans residues 164-184; it reads VIEVLEALLIFVYLNMILLYL. Residues 185–188 are Cytoplasmic-facing; it reads LPRC. A helical transmembrane segment spans residues 189–209; that stretch reads FTPGEALLVLGGISFMLNQLI. The Lumenal segment spans residues 210-224; it reads KRSLTVVESQGDPLD. A helical membrane pass occupies residues 225–245; that stretch reads FFLLVVVVGMVLMGIFFSTLF. Residues 246 to 254 lie on the Cytoplasmic side of the membrane; that stretch reads VFMDSGTWA. A helical membrane pass occupies residues 255 to 275; that stretch reads SSIFFHLMTCVLGLGVVLPWL. Over 276–297 the chain is Lumenal; sequence HRLIRRNPLLWLFQFLFQTETR. Residues 298–318 traverse the membrane as a helical segment; the sequence is VYLLAYWCLLATVACLVVLYQ. Topologically, residues 319 to 337 are cytoplasmic; the sequence is NAKRSSSESKKHQAPTITR. A helical transmembrane segment spans residues 338-354; the sequence is KYFHFIVVATYIPGIIL. Residues 355-359 lie on the Lumenal side of the membrane; the sequence is DRPLL. Residues 360–380 traverse the membrane as a helical segment; sequence YVAATVCLAVFIFLEYVRYFR. The Cytoplasmic portion of the chain corresponds to 381 to 401; sequence IKPLGHTLRSLLSLFLDERDS. The helical transmembrane segment at 402–422 threads the bilayer; sequence GPLILTHIYLLLGMSLPIWLV. The Lumenal portion of the chain corresponds to 423–436; it reads PRPCTQKGSLGGAR. Residues 437–457 form a helical membrane-spanning segment; it reads ALVPYAGVLAVGVGDTVASIF. Residues 458–472 lie on the Cytoplasmic side of the membrane; sequence GSTMGEIRWPGTKKT. The interval 459–474 is CTP-binding; the sequence is STMGEIRWPGTKKTFE. A helical membrane pass occupies residues 473 to 493; sequence FEGTMTSIFAQIISVALILIF. Residues 494–495 are Lumenal-facing; that stretch reads DS. A helical transmembrane segment spans residues 496 to 516; sequence GVDLNYSYAWILGSISTVSLL. The Cytoplasmic segment spans residues 517–538; that stretch reads EAYTTQIDNLLLPLYLLILLMA.

It belongs to the polyprenol kinase family.

Its subcellular location is the endoplasmic reticulum membrane. It carries out the reaction a di-trans,poly-cis-dolichol + CTP = a di-trans,poly-cis-dolichyl phosphate + CDP + H(+). Its pathway is protein modification; protein glycosylation. Catalyzes CTP-mediated phosphorylation of dolichol, the terminal step in de novo dolichyl monophosphate (Dol-P) biosynthesis. Dol-P is a lipid carrier essential for the synthesis of N-linked and O-linked oligosaccharides and for GPI anchors. This is Dolichol kinase (DOLK) from Bos taurus (Bovine).